A 591-amino-acid polypeptide reads, in one-letter code: Adsorption protein P2 (591 aa).

Cysteines 254 and 277 form a disulfide.

The protein localises to the virion. Adsorption protein. In association with P31 and trimeric P5, forms the spike complexes located at the 5-fold vertices of the capsid. Involved in recognition and attachment to the receptor on the surface of the host. Likely triggers the processes of vertex disassembly, membrane tube formation, and subsequent DNA injection. Essential for viral infectivity. This Acinetobacter calcoaceticus (Arthrobacter siderocapsulatus) protein is Adsorption protein P2 (II).